The chain runs to 490 residues: Protein nucleotidyltransferase YdiU (490 aa).

Positions 94, 96, 97, 117, 129, 130, 180, and 187 each coordinate ATP. Aspartate 256 serves as the catalytic Proton acceptor. Residues asparagine 257 and aspartate 266 each coordinate Mg(2+). Position 266 (aspartate 266) interacts with ATP.

This sequence belongs to the SELO family. Requires Mg(2+) as cofactor. Mn(2+) is required as a cofactor.

The enzyme catalyses L-seryl-[protein] + ATP = 3-O-(5'-adenylyl)-L-seryl-[protein] + diphosphate. It carries out the reaction L-threonyl-[protein] + ATP = 3-O-(5'-adenylyl)-L-threonyl-[protein] + diphosphate. It catalyses the reaction L-tyrosyl-[protein] + ATP = O-(5'-adenylyl)-L-tyrosyl-[protein] + diphosphate. The catalysed reaction is L-histidyl-[protein] + UTP = N(tele)-(5'-uridylyl)-L-histidyl-[protein] + diphosphate. The enzyme catalyses L-seryl-[protein] + UTP = O-(5'-uridylyl)-L-seryl-[protein] + diphosphate. It carries out the reaction L-tyrosyl-[protein] + UTP = O-(5'-uridylyl)-L-tyrosyl-[protein] + diphosphate. In terms of biological role, nucleotidyltransferase involved in the post-translational modification of proteins. It can catalyze the addition of adenosine monophosphate (AMP) or uridine monophosphate (UMP) to a protein, resulting in modifications known as AMPylation and UMPylation. This is Protein nucleotidyltransferase YdiU from Clostridium perfringens (strain 13 / Type A).